Consider the following 865-residue polypeptide: MGKALVIVESPAKAKTINKYLGSDYVVKSSVGHIRDLPTSGSAAKKSADSTSTKTAKKPKKDERGALVNRMGVDPWHNWEAHYEVLPGKEKVVSELKQLAEKADHIYLATDLDREGEAIAWHLREVIGGDDARYSRVVFNEITKNAIRQAFNKPGELNIDRVNAQQARRFMDRVVGYMVSPLLWKKIARGLSAGRVQSVAVRLVVEREREIKAFVPEEFWEVDASTTTPSGEALALQVTHQNDKPFRPVNKEQTQAAVSLLEKARYSVLEREDKPTTSKPGAPFITSTLQQAASTRLGFGVKKTMMMAQRLYEAGYITYMRTDSTNLSQDAVNMVRGYISDNFGKKYLPESPNQYASKENSQEAHEAIRPSDVNVMAESLKDMEADAQKLYQLIWRQFVACQMTPAKYDSTTLTVGAGDFRLKARGRILRFDGWTKVMPALRKGDEDRILPAVNKGDALTLVELTPAQHFTKPPARFSEASLVKELEKRGIGRPSTYASIISTIQDRGYVRVENRRFYAEKMGEIVTDRLEENFRELMNYDFTAQMENSLDQVANHEAEWKAVLDHFFSDFTQQLDKAEKDPEEGGMRPNQMVLTSIDCPTCGRKMGIRTASTGVFLGCSGYALPPKERCKTTINLVPENEVLNVLEGEDAETNALRAKRRCPKCGTAMDSYLIDPKRKLHVCGNNPTCDGYEIEEGEFRIKGYDGPIVECEKCGSEMHLKMGRFGKYMACTNEECKNTRKILRNGEVAPPKEDPVPLPELPCEKSDAYFVLRDGAAGVFLAANTFPKSRETRAPLVEELYRFRDRLPEKLRYLADAPQQDPEGNKTMVRFSRKTKQQYVSSEKDGKATGWSAFYVDGKWVEGKK.

A Toprim domain is found at 3-142; sequence KALVIVESPA…RYSRVVFNEI (140 aa). Glutamate 9 contributes to the Mg(2+) binding site. The disordered stretch occupies residues 37–65; sequence LPTSGSAAKKSADSTSTKTAKKPKKDERG. A compositionally biased stretch (low complexity) spans 39–54; sequence TSGSAAKKSADSTSTK. A Mg(2+)-binding site is contributed by aspartate 111. Residues 158–575 form the Topo IA-type catalytic domain; that stretch reads NIDRVNAQQA…HFFSDFTQQL (418 aa). Positions 192-197 are interaction with DNA; sequence SAGRVQ. Tyrosine 319 (O-(5'-phospho-DNA)-tyrosine intermediate) is an active-site residue. C4-type zinc fingers lie at residues 599 to 630, 662 to 689, and 711 to 736; these read CPTC…KERC, CPKC…NPTC, and CEKC…NEEC.

This sequence belongs to the type IA topoisomerase family. As to quaternary structure, monomer. The cofactor is Mn(2+). Requires Ca(2+) as cofactor.

The catalysed reaction is ATP-independent breakage of single-stranded DNA, followed by passage and rejoining.. Releases the supercoiling and torsional tension of DNA, which is introduced during the DNA replication and transcription, by transiently cleaving and rejoining one strand of the DNA duplex. Introduces a single-strand break via transesterification at a target site in duplex DNA. The scissile phosphodiester is attacked by the catalytic tyrosine of the enzyme, resulting in the formation of a DNA-(5'-phosphotyrosyl)-enzyme intermediate and the expulsion of a 3'-OH DNA strand. The free DNA strand then undergoes passage around the unbroken strand, thus removing DNA supercoils. Finally, in the religation step, the DNA 3'-OH attacks the covalent intermediate to expel the active-site tyrosine and restore the DNA phosphodiester backbone. The chain is DNA topoisomerase 1 from Escherichia coli (strain K12).